The following is a 554-amino-acid chain: (S)-1-hydroxy-N-methylcanadine 13-hydroxylase CYP82X2 (554 aa).

Residues 23–43 (IISTFIVTIISIVFLYTVLLI) form a helical membrane-spanning segment. Cys-494 serves as a coordination point for heme.

It belongs to the cytochrome P450 family. Heme is required as a cofactor. As to expression, highly expressed in capsules. Expressed is stems.

Its subcellular location is the membrane. It catalyses the reaction (S)-1-hydroxy-N-methylcanadine + reduced [NADPH--hemoprotein reductase] + O2 = (13S,14R)-1,13-dihydroxy-N-methylcanadine + oxidized [NADPH--hemoprotein reductase] + H2O + H(+). The protein operates within alkaloid biosynthesis. Functionally, cytochrome P450 involved in the biosynthesis of the benzylisoquinoline alkaloid noscapine. Converts (S)-1-hydroxy-N-methylcanadine to (13S,14R)-1,13-dihydroxy-N-methylcanadine. The polypeptide is (S)-1-hydroxy-N-methylcanadine 13-hydroxylase CYP82X2 (Papaver somniferum (Opium poppy)).